A 648-amino-acid chain; its full sequence is Probable LRR receptor-like serine/threonine-protein kinase At4g30520 (648 aa).

An N-terminal signal peptide occupies residues 1 to 30; it reads MVVVTKKTMKIQIHLLYSFLFLCFSTLTLS. At 31 to 238 the chain is on the extracellular side; the sequence is SEPRNPEVEA…SSSGRRSNRL (208 aa). Residues Asn99 and Asn112 are each glycosylated (N-linked (GlcNAc...) asparagine). LRR repeat units lie at residues 100-125, 127-148, 149-172, and 174-199; these read LTNL…GFLP, LQTL…IDQL, SSLQ…LSQI, and HLSF…TFNV. Residues Asn158 and Asn184 are each glycosylated (N-linked (GlcNAc...) asparagine). The chain crosses the membrane as a helical span at residues 239–259; the sequence is AIALSVSLGSVVILVLALGSF. Over 260-648 the chain is Cytoplasmic; that stretch reads CWYRKKQRRL…SFAMELSGPR (389 aa). Thr300 carries the post-translational modification Phosphothreonine. A Protein kinase domain is found at 303–582; that stretch reads FSSKNILGAG…EGDGLAERWA (280 aa). ATP is bound at residue 309–317; that stretch reads LGAGGFGNV. Position 326 is a phosphothreonine (Thr326). Position 331 (Lys331) interacts with ATP. A phosphoserine mark is found at Ser384 and Ser387. Asp426 serves as the catalytic Proton acceptor. Residues Thr459, Thr460, and Thr465 each carry the phosphothreonine modification. Position 473 is a phosphotyrosine (Tyr473). Phosphoserine is present on Ser475. Residue Thr476 is modified to Phosphothreonine. Residue Ser480 is modified to Phosphoserine. Thr555 is modified (phosphothreonine).

Belongs to the protein kinase superfamily. Ser/Thr protein kinase family.

Its subcellular location is the cell membrane. It carries out the reaction L-seryl-[protein] + ATP = O-phospho-L-seryl-[protein] + ADP + H(+). It catalyses the reaction L-threonyl-[protein] + ATP = O-phospho-L-threonyl-[protein] + ADP + H(+). The polypeptide is Probable LRR receptor-like serine/threonine-protein kinase At4g30520 (Arabidopsis thaliana (Mouse-ear cress)).